The chain runs to 380 residues: Epoxyqueuosine reductase (380 aa).

Residue aspartate 134 is the Proton donor of the active site. A 4Fe-4S ferredoxin-type 1 domain is found at 178–208; sequence FPPDKPIEDQCGGCTKCIDICPTGALIQGGQ. Cysteine 188, cysteine 191, cysteine 194, cysteine 198, cysteine 214, cysteine 240, cysteine 243, and cysteine 247 together coordinate [4Fe-4S] cluster. In terms of domain architecture, 4Fe-4S ferredoxin-type 2 spans 226–258; it reads PEEYRDKIGNRIYGCDTCQTVCPKNKGMDFHNH.

It belongs to the QueG family. In terms of assembly, monomer. It depends on cob(II)alamin as a cofactor. Requires [4Fe-4S] cluster as cofactor.

It localises to the cytoplasm. It catalyses the reaction epoxyqueuosine(34) in tRNA + AH2 = queuosine(34) in tRNA + A + H2O. It participates in tRNA modification; tRNA-queuosine biosynthesis. Catalyzes the conversion of epoxyqueuosine (oQ) to queuosine (Q), which is a hypermodified base found in the wobble positions of tRNA(Asp), tRNA(Asn), tRNA(His) and tRNA(Tyr). The polypeptide is Epoxyqueuosine reductase (Bacillus cereus (strain ATCC 14579 / DSM 31 / CCUG 7414 / JCM 2152 / NBRC 15305 / NCIMB 9373 / NCTC 2599 / NRRL B-3711)).